Reading from the N-terminus, the 185-residue chain is Ribosome-recycling factor (185 aa).

This sequence belongs to the RRF family.

Its subcellular location is the cytoplasm. Functionally, responsible for the release of ribosomes from messenger RNA at the termination of protein biosynthesis. May increase the efficiency of translation by recycling ribosomes from one round of translation to another. This chain is Ribosome-recycling factor, found in Streptococcus gordonii (strain Challis / ATCC 35105 / BCRC 15272 / CH1 / DL1 / V288).